A 103-amino-acid chain; its full sequence is Small ribosomal subunit protein uS10 (103 aa).

It belongs to the universal ribosomal protein uS10 family. Part of the 30S ribosomal subunit.

Functionally, involved in the binding of tRNA to the ribosomes. In Methylibium petroleiphilum (strain ATCC BAA-1232 / LMG 22953 / PM1), this protein is Small ribosomal subunit protein uS10.